The chain runs to 295 residues: Light-independent protochlorophyllide reductase iron-sulfur ATP-binding protein (295 aa).

Residues 39-44 (GIGKST) and Lys68 each bind ATP. Ser43 lines the Mg(2+) pocket. Cys124 and Cys158 together coordinate [4Fe-4S] cluster. 209–210 (NR) is a binding site for ATP.

Belongs to the NifH/BchL/ChlL family. In terms of assembly, homodimer. Protochlorophyllide reductase is composed of three subunits; ChlL, ChlN and ChlB. [4Fe-4S] cluster is required as a cofactor.

It carries out the reaction chlorophyllide a + oxidized 2[4Fe-4S]-[ferredoxin] + 2 ADP + 2 phosphate = protochlorophyllide a + reduced 2[4Fe-4S]-[ferredoxin] + 2 ATP + 2 H2O. It participates in porphyrin-containing compound metabolism; chlorophyll biosynthesis (light-independent). Its function is as follows. Component of the dark-operative protochlorophyllide reductase (DPOR) that uses Mg-ATP and reduced ferredoxin to reduce ring D of protochlorophyllide (Pchlide) to form chlorophyllide a (Chlide). This reaction is light-independent. The L component serves as a unique electron donor to the NB-component of the complex, and binds Mg-ATP. The polypeptide is Light-independent protochlorophyllide reductase iron-sulfur ATP-binding protein (Prochlorococcus marinus (strain MIT 9301)).